A 201-amino-acid chain; its full sequence is Small ribosomal subunit protein uS4 (201 aa).

Residues 1-42 (MARYTGPATRKSRRLGVDLVGGDQSFEKRPYPPGQHGRARIK) are disordered. In terms of domain architecture, S4 RNA-binding spans 91–157 (SRLDNVVYRA…LPFQIARETA (67 aa)).

It belongs to the universal ribosomal protein uS4 family. As to quaternary structure, part of the 30S ribosomal subunit. Contacts protein S5. The interaction surface between S4 and S5 is involved in control of translational fidelity.

Its function is as follows. One of the primary rRNA binding proteins, it binds directly to 16S rRNA where it nucleates assembly of the body of the 30S subunit. With S5 and S12 plays an important role in translational accuracy. The polypeptide is Small ribosomal subunit protein uS4 (Mycolicibacterium smegmatis (strain ATCC 700084 / mc(2)155) (Mycobacterium smegmatis)).